Here is a 180-residue protein sequence, read N- to C-terminus: Ribosome maturation factor RimM (180 aa).

Positions 103–176 (GDIWWDRDLV…RIVVDPPPGL (74 aa)) constitute a PRC barrel domain.

This sequence belongs to the RimM family. In terms of assembly, binds ribosomal protein uS19.

It localises to the cytoplasm. Functionally, an accessory protein needed during the final step in the assembly of 30S ribosomal subunit, possibly for assembly of the head region. Essential for efficient processing of 16S rRNA. May be needed both before and after RbfA during the maturation of 16S rRNA. It has affinity for free ribosomal 30S subunits but not for 70S ribosomes. The chain is Ribosome maturation factor RimM from Frankia alni (strain DSM 45986 / CECT 9034 / ACN14a).